The primary structure comprises 428 residues: Acylglycerol kinase, mitochondrial (428 aa).

The hydrophobic stretch occupies residues 18 to 34 (STVGFCLLAYGSHWLYG). The DAGKc domain occupies 61-202 (SAIKKATVFL…LDVLQIKGEQ (142 aa)).

It belongs to the AGK family. Component of the TIM22 complex. It depends on Mg(2+) as a cofactor.

It localises to the mitochondrion inner membrane. It is found in the mitochondrion intermembrane space. The enzyme catalyses a monoacylglycerol + ATP = a monoacyl-sn-glycero-3-phosphate + ADP + H(+). The catalysed reaction is a 1,2-diacyl-sn-glycerol + ATP = a 1,2-diacyl-sn-glycero-3-phosphate + ADP + H(+). It catalyses the reaction an N-acylsphing-4-enine + ATP = an N-acylsphing-4-enine 1-phosphate + ADP + H(+). It carries out the reaction 1-(9Z-octadecenoyl)-sn-glycerol + ATP = 1-(9Z-octadecenoyl)-sn-glycero-3-phosphate + ADP + H(+). The enzyme catalyses 1,2-di-(9Z-octadecenoyl)-sn-glycerol + ATP = 1,2-di-(9Z-octadecenoyl)-sn-glycero-3-phosphate + ADP + H(+). The catalysed reaction is a 1-acyl-sn-glycerol + ATP = a 1-acyl-sn-glycero-3-phosphate + ADP + H(+). It catalyses the reaction 1-hexadecanoyl-sn-glycerol + ATP = 1-hexadecanoyl-sn-glycero-3-phosphate + ADP + H(+). It carries out the reaction a 2-acylglycerol + ATP = a 2-acyl-sn-glycerol 3-phosphate + ADP + H(+). The enzyme catalyses 2-(5Z,8Z,11Z,14Z-eicosatetraenoyl)-glycerol + ATP = 2-(5Z,8Z,11Z,14Z-eicosatetraenoyl)-sn-glycero-3-phosphate + ADP + H(+). The catalysed reaction is 1-(5Z,8Z,11Z,14Z-eicosatetraenoyl)-sn-glycerol + ATP = 1-(5Z,8Z,11Z,14Z-eicosatetraenoyl)-sn-glycero-3-phosphate + ADP + H(+). It catalyses the reaction N-(hexanoyl)sphing-4-enine + ATP = N-hexanoylsphing-4-enine 1-phosphate + ADP + H(+). The protein operates within lipid metabolism; glycerolipid metabolism. Functionally, lipid kinase that can phosphorylate both monoacylglycerol and diacylglycerol to form lysophosphatidic acid (LPA) and phosphatidic acid (PA), respectively. Phosphorylates ceramide but not sphingosine. Phosphorylates 1,2-dioleoylglycerol more rapidly than 2,3-dioleoylglycerol. Independently of its lipid kinase activity, acts as a component of the TIM22 complex. The TIM22 complex mediates the import and insertion of multi-pass transmembrane proteins into the mitochondrial inner membrane by forming a twin-pore translocase that uses the membrane potential as the external driving force. This chain is Acylglycerol kinase, mitochondrial, found in Xenopus laevis (African clawed frog).